A 153-amino-acid chain; its full sequence is Phosphopantetheine adenylyltransferase (153 aa).

Residue serine 11 coordinates substrate. Residues 11-12 (SF) and histidine 19 contribute to the ATP site. The substrate site is built by lysine 43, threonine 75, and arginine 89. ATP is bound by residues 90 to 92 (GIR), glutamate 100, and 124 to 130 (LSFISSS).

It belongs to the bacterial CoaD family. In terms of assembly, homohexamer. Requires Mg(2+) as cofactor.

The protein localises to the cytoplasm. The catalysed reaction is (R)-4'-phosphopantetheine + ATP + H(+) = 3'-dephospho-CoA + diphosphate. The protein operates within cofactor biosynthesis; coenzyme A biosynthesis; CoA from (R)-pantothenate: step 4/5. Its function is as follows. Reversibly transfers an adenylyl group from ATP to 4'-phosphopantetheine, yielding dephospho-CoA (dPCoA) and pyrophosphate. The chain is Phosphopantetheine adenylyltransferase from Porphyromonas gingivalis (strain ATCC 33277 / DSM 20709 / CIP 103683 / JCM 12257 / NCTC 11834 / 2561).